Consider the following 63-residue polypeptide: Protein DsrB (63 aa).

The protein belongs to the DsrB family.

The protein is Protein DsrB of Yersinia enterocolitica serotype O:8 / biotype 1B (strain NCTC 13174 / 8081).